The primary structure comprises 85 residues: HPr-like protein Crh (85 aa).

The HPr domain occupies 1–85 (MVQQKVEVRL…KLAAYVQEEV (85 aa)). The residue at position 46 (serine 46) is a Phosphoserine; by HPrK/P.

The protein belongs to the HPr family. In terms of assembly, mixture of monomers and homodimers. Interacts with CcpA as a monomer.

Functionally, along with seryl-phosphorylated HPr, phosphorylated Crh is implicated in carbon catabolite repression (CCR) of levanase, inositol dehydrogenase, and beta-xylosidase. Exerts its effect on CCR by interacting with CcpA. This is HPr-like protein Crh (crh) from Bacillus subtilis (strain 168).